A 409-amino-acid polypeptide reads, in one-letter code: Histone deacetylase 7 (409 aa).

Residues 11–324 are histone deacetylase; that stretch reads RVSYFYEPMI…WCYETAIAVG (314 aa). Catalysis depends on His-148, which acts as the Proton donor/acceptor. Asp-267 is a Zn(2+) binding site. Residues 383–409 form a disordered region; sequence PFQDTPSSSQATEAAEVDMEKRNDPRI. Over residues 384 to 394 the composition is skewed to polar residues; sequence FQDTPSSSQAT. Positions 400 to 409 are enriched in basic and acidic residues; that stretch reads DMEKRNDPRI.

This sequence belongs to the histone deacetylase family. HD type 1 subfamily. It depends on Zn(2+) as a cofactor. As to expression, low expression in flowers.

It is found in the nucleus. It carries out the reaction N(6)-acetyl-L-lysyl-[histone] + H2O = L-lysyl-[histone] + acetate. Responsible for the deacetylation of lysine residues on the N-terminal part of the core histones (H2A, H2B, H3 and H4). Histone deacetylation gives a tag for epigenetic repression and plays an important role in transcriptional regulation, cell cycle progression and developmental events. May be involved in flowering induction. Histone deacetylases act via the formation of large multiprotein complexes. This Arabidopsis thaliana (Mouse-ear cress) protein is Histone deacetylase 7 (HDA7).